The chain runs to 432 residues: Phosphomethylpyrimidine synthase (432 aa).

Substrate contacts are provided by residues Asn69, Met98, Tyr127, His163, 185–187 (SRG), 226–229 (DACR), and Glu265. His269 is a Zn(2+) binding site. Substrate is bound at residue Tyr292. Position 333 (His333) interacts with Zn(2+). [4Fe-4S] cluster contacts are provided by Cys409, Cys412, and Cys416.

This sequence belongs to the ThiC family. [4Fe-4S] cluster is required as a cofactor.

It catalyses the reaction 5-amino-1-(5-phospho-beta-D-ribosyl)imidazole + S-adenosyl-L-methionine = 4-amino-2-methyl-5-(phosphooxymethyl)pyrimidine + CO + 5'-deoxyadenosine + formate + L-methionine + 3 H(+). It participates in cofactor biosynthesis; thiamine diphosphate biosynthesis. Its function is as follows. Catalyzes the synthesis of the hydroxymethylpyrimidine phosphate (HMP-P) moiety of thiamine from aminoimidazole ribotide (AIR) in a radical S-adenosyl-L-methionine (SAM)-dependent reaction. In Pelotomaculum thermopropionicum (strain DSM 13744 / JCM 10971 / SI), this protein is Phosphomethylpyrimidine synthase.